The primary structure comprises 453 residues: ACT domain-containing protein ACR3 (453 aa).

4 consecutive ACT domains span residues 37–112 (LVKV…SASQ), 130–212 (SIEI…KFAR), 266–341 (VINV…RVSE), and 344–423 (SLEL…VPSR).

Expressed in roots, cotyledons, rosette and cauline leaves, sepals, style, and pedicels and tips of young developing siliques.

Functionally, may bind amino acids. This Arabidopsis thaliana (Mouse-ear cress) protein is ACT domain-containing protein ACR3.